A 906-amino-acid polypeptide reads, in one-letter code: Translation initiation factor IF-2 (906 aa).

Disordered regions lie at residues 134 to 250 and 269 to 317; these read RQRN…GSHV and HLSA…FERP. Basic and acidic residues predominate over residues 136 to 177; sequence RNLDEQQRLAESDRVRDEEIQRKRDEEQAAKDRAEAERKAAE. Low complexity-rich tracts occupy residues 178–232 and 287–305; these read EAAA…STPA and GRPG…RGSN. In terms of domain architecture, tr-type G spans 405-574; the sequence is TRPPVVTIMG…SLQAEVLELK (170 aa). Residues 414-421 form a G1 region; it reads GHVDHGKT. 414-421 contributes to the GTP binding site; that stretch reads GHVDHGKT. A G2 region spans residues 439-443; that stretch reads GITQH. The tract at residues 460-463 is G3; that stretch reads DTPG. GTP-binding positions include 460–464 and 514–517; these read DTPGH and NKID. A G4 region spans residues 514 to 517; it reads NKID. The segment at 550–552 is G5; the sequence is SAK.

Belongs to the TRAFAC class translation factor GTPase superfamily. Classic translation factor GTPase family. IF-2 subfamily.

It localises to the cytoplasm. Functionally, one of the essential components for the initiation of protein synthesis. Protects formylmethionyl-tRNA from spontaneous hydrolysis and promotes its binding to the 30S ribosomal subunits. Also involved in the hydrolysis of GTP during the formation of the 70S ribosomal complex. In Xanthomonas oryzae pv. oryzae (strain MAFF 311018), this protein is Translation initiation factor IF-2.